Reading from the N-terminus, the 275-residue chain is Protein rolling stone (275 aa).

6 consecutive transmembrane segments (helical) span residues 45-65 (LLYRWIWALFFLGVYIMCVIV), 72-92 (FFIYMTNWGFGLCTITMLISA), 127-147 (WLYNMTLSLALIISTVYWVFL), 162-182 (IITHGMNSVMMLIDFLVIAFP), 185-205 (ILHMVYGMSLAIFFFLFTLIY), and 232-252 (MVTFVGIFLLIMCYWVLLFGL).

In terms of tissue distribution, expressed in cells of the somatic mesoderm, most notably the muscle founder cells, between embryonic stages 12 and 14, in growing muscle fibers in dorsal, lateral and ventral positions. At stage 16 strongest expression is in some ventral muscles and muscle 8. At stages 16/17 expression is restricted to some cells of the CNS, the brain and the gonads.

The protein localises to the membrane. In terms of biological role, may have a central role in the fusion process during myogenesis, within the somatic mesoderm. The sequence is that of Protein rolling stone (rost) from Drosophila melanogaster (Fruit fly).